Here is a 310-residue protein sequence, read N- to C-terminus: Protoheme IX farnesyltransferase (310 aa).

9 consecutive transmembrane segments (helical) span residues 26–46 (VMSL…ATVH), 47–67 (PMIA…SGAL), 95–115 (GEAL…LGLA), 118–138 (LFAA…YSMW), 147–167 (IVIG…VATG), 174–194 (LFMF…LALF), 220–240 (VLAY…TGIG), 243–263 (LYLV…VRIW), and 281–301 (FFRF…AEAA).

It belongs to the UbiA prenyltransferase family. Protoheme IX farnesyltransferase subfamily. Interacts with CtaA.

Its subcellular location is the cell inner membrane. It carries out the reaction heme b + (2E,6E)-farnesyl diphosphate + H2O = Fe(II)-heme o + diphosphate. It functions in the pathway porphyrin-containing compound metabolism; heme O biosynthesis; heme O from protoheme: step 1/1. Converts heme B (protoheme IX) to heme O by substitution of the vinyl group on carbon 2 of heme B porphyrin ring with a hydroxyethyl farnesyl side group. The protein is Protoheme IX farnesyltransferase of Cereibacter sphaeroides (strain ATCC 17025 / ATH 2.4.3) (Rhodobacter sphaeroides).